The sequence spans 372 residues: Putative glutamate--cysteine ligase 2 (372 aa).

This sequence belongs to the glutamate--cysteine ligase type 2 family. YbdK subfamily. As to quaternary structure, homodimer.

The enzyme catalyses L-cysteine + L-glutamate + ATP = gamma-L-glutamyl-L-cysteine + ADP + phosphate + H(+). ATP-dependent carboxylate-amine ligase which exhibits weak glutamate--cysteine ligase activity. In Salmonella typhimurium (strain LT2 / SGSC1412 / ATCC 700720), this protein is Putative glutamate--cysteine ligase 2 (ybdK).